A 281-amino-acid polypeptide reads, in one-letter code: 4-diphosphocytidyl-2-C-methyl-D-erythritol kinase (281 aa).

Lys15 is an active-site residue. An ATP-binding site is contributed by 98 to 108; the sequence is PTGAGLGGGSS. Asp140 is a catalytic residue.

The protein belongs to the GHMP kinase family. IspE subfamily.

The catalysed reaction is 4-CDP-2-C-methyl-D-erythritol + ATP = 4-CDP-2-C-methyl-D-erythritol 2-phosphate + ADP + H(+). Its pathway is isoprenoid biosynthesis; isopentenyl diphosphate biosynthesis via DXP pathway; isopentenyl diphosphate from 1-deoxy-D-xylulose 5-phosphate: step 3/6. Its function is as follows. Catalyzes the phosphorylation of the position 2 hydroxy group of 4-diphosphocytidyl-2C-methyl-D-erythritol. This is 4-diphosphocytidyl-2-C-methyl-D-erythritol kinase from Neisseria meningitidis serogroup A / serotype 4A (strain DSM 15465 / Z2491).